The sequence spans 340 residues: Probable rRNA-processing protein EBP2 homolog (340 aa).

Residues 1–10 (MVRKMNKLAK) are compositionally biased toward basic residues. 2 disordered regions span residues 1 to 59 (MVRK…DDDE) and 245 to 340 (HGLD…RGRR). 2 stretches are compositionally biased toward acidic residues: residues 23–37 (PESDSDGSEFDFDNA) and 46–59 (MDIEEVESDGDDDE). Residues 206–245 (QKEVLAAKNTEKKNLAEAVKKHKKGMKQQLEDMLNNVKRH) adopt a coiled-coil conformation. Gly residues-rich tracts occupy residues 264-277 (GRGGAGRGGAGRGG) and 318-333 (PRGGFGGRGRGGGRGG).

It belongs to the EBP2 family.

The protein resides in the nucleus. Its subcellular location is the nucleolus. Functionally, required for the processing of the 27S pre-rRNA. The chain is Probable rRNA-processing protein EBP2 homolog from Caenorhabditis elegans.